The chain runs to 276 residues: Ribosomal RNA small subunit methyltransferase A (276 aa).

Residues Asn-27, Leu-29, Gly-54, Glu-75, Asp-101, and Asn-123 each coordinate S-adenosyl-L-methionine.

This sequence belongs to the class I-like SAM-binding methyltransferase superfamily. rRNA adenine N(6)-methyltransferase family. RsmA subfamily.

The protein localises to the cytoplasm. The catalysed reaction is adenosine(1518)/adenosine(1519) in 16S rRNA + 4 S-adenosyl-L-methionine = N(6)-dimethyladenosine(1518)/N(6)-dimethyladenosine(1519) in 16S rRNA + 4 S-adenosyl-L-homocysteine + 4 H(+). Its function is as follows. Specifically dimethylates two adjacent adenosines (A1518 and A1519) in the loop of a conserved hairpin near the 3'-end of 16S rRNA in the 30S particle. May play a critical role in biogenesis of 30S subunits. The sequence is that of Ribosomal RNA small subunit methyltransferase A from Bartonella henselae (strain ATCC 49882 / DSM 28221 / CCUG 30454 / Houston 1) (Rochalimaea henselae).